A 195-amino-acid polypeptide reads, in one-letter code: Killer cell lectin-like receptor subfamily G member 1 (195 aa).

Over 1–38 the chain is Cytoplasmic; that stretch reads MTDSVIYSMLELPTATQAQNDYGPQQKSSSSRPSCSCL. Residues 5–10 carry the ITIM motif motif; that stretch reads VIYSML. The chain crosses the membrane as a helical; Signal-anchor for type II membrane protein span at residues 39–59; sequence VAIALGLLTAVLLSVLLYQWI. Over 60 to 195 the chain is Extracellular; it reads LCQGSNYSTC…KCPFADQALF (136 aa). N-linked (GlcNAc...) asparagine glycosylation occurs at Asn65. Cysteines 75 and 86 form a disulfide. The C-type lectin domain occupies 82–185; sequence YGNHCYYFSV…CEVPLHWVCK (104 aa). 3 N-linked (GlcNAc...) asparagine glycosylation sites follow: Asn97, Asn137, and Asn150. Intrachain disulfides connect Cys103–Cys184 and Cys163–Cys176.

In terms of assembly, forms a monomer and homodimer; disulfide-linked. Interacts (via ITIM motif) with PTPN11 and INPP5D. In terms of tissue distribution, expressed specifically on natural killer (NK) cells and T-cells, mainly CD8 T-cells.

It is found in the cell membrane. In terms of biological role, plays an inhibitory role on natural killer (NK) cells and T-cell functions upon binding to their non-MHC ligands. May mediate missing self recognition by binding to a highly conserved site on classical cadherins, enabling it to monitor expression of E-cadherin/CDH1, N-cadherin/CDH2 and R-cadherin/CDH4 on target cells. This is Killer cell lectin-like receptor subfamily G member 1 (KLRG1) from Homo sapiens (Human).